We begin with the raw amino-acid sequence, 440 residues long: UPF0489 protein C5orf22 homolog (440 aa).

Residues 187 to 207 are disordered; it reads VEGSSSGIQSSTSESSEDGLM. Low complexity predominate over residues 188 to 200; that stretch reads EGSSSGIQSSTSE.

This sequence belongs to the UPF0489 family.

The polypeptide is UPF0489 protein C5orf22 homolog (Xenopus tropicalis (Western clawed frog)).